A 527-amino-acid polypeptide reads, in one-letter code: Neutrophil cytosol factor 2 (527 aa).

TPR repeat units follow at residues serine 37 to leucine 70, alanine 71 to asparagine 104, and cysteine 121 to proline 154. Threonine 233 carries the post-translational modification Phosphothreonine. Residues leucine 240 to leucine 299 enclose the SH3 1 domain. The tract at residues glutamine 304–isoleucine 345 is disordered. Serine 324 is subject to Phosphoserine. Residues lysine 336 to isoleucine 345 show a composition bias toward basic and acidic residues. The 79-residue stretch at serine 352–threonine 430 folds into the PB1 domain. A Phosphoserine modification is found at serine 400. The tract at residues glutamine 434–leucine 457 is disordered. The region spanning lysine 458–threonine 517 is the SH3 2 domain.

Belongs to the NCF2/NOXA1 family. In terms of assembly, component of the phagocyte NADPH oxidase complex composed of an obligatory core heterodimer formed by the membrane proteins CYBA and CYBB and the cytosolic regulatory subunits NCF1/p47-phox, NCF2/p67-phox, NCF4/p40-phox and the small GTPase RAC1 or RAC2. Part of a cytosolic complex composed at least by NCF1, NCF2 and NCF4. Interacts with NCF4. Interacts (via the C-terminal SH3 domain) with NCF1 (via C-terminus). Interacts with SYTL1 and RAC1. May interact with NOXO1. Interacts with S100A8 and calprotectin (S100A8/9). Interacts with GBP7 (via GB1/RHD3-type G domain). Interacts with CYBB; the interaction is enhanced in the presence of GBP7.

It is found in the cytoplasm. Subunit of the phagocyte NADPH oxidase complex that mediates the transfer of electrons from cytosolic NADPH to O2 to produce the superoxide anion (O2(-)). In the activated complex, electrons are first transferred from NADPH to flavin adenine dinucleotide (FAD) and subsequently transferred via two heme molecules to molecular oxygen, producing superoxide through an outer-sphere reaction. Activation of the NADPH oxidase complex is initiated by the assembly of cytosolic subunits of the NADPH oxidase complex with the core NADPH oxidase complex to form a complex at the plasma membrane or phagosomal membrane. This activation process is initiated by phosphorylation dependent binding of the cytosolic NCF1/p47-phox subunit to the C-terminus of CYBA/p22-phox. This is Neutrophil cytosol factor 2 from Bos taurus (Bovine).